Consider the following 121-residue polypeptide: Protein TusC (121 aa).

It belongs to the DsrF/TusC family. In terms of assembly, heterohexamer, formed by a dimer of trimers. The hexameric TusBCD complex contains 2 copies each of TusB, TusC and TusD. The TusBCD complex interacts with TusE.

It localises to the cytoplasm. Its function is as follows. Part of a sulfur-relay system required for 2-thiolation of 5-methylaminomethyl-2-thiouridine (mnm(5)s(2)U) at tRNA wobble positions. This is Protein TusC from Yersinia enterocolitica serotype O:8 / biotype 1B (strain NCTC 13174 / 8081).